A 410-amino-acid chain; its full sequence is Gamma-glutamyl phosphate reductase (410 aa).

Belongs to the gamma-glutamyl phosphate reductase family.

It localises to the cytoplasm. It catalyses the reaction L-glutamate 5-semialdehyde + phosphate + NADP(+) = L-glutamyl 5-phosphate + NADPH + H(+). The protein operates within amino-acid biosynthesis; L-proline biosynthesis; L-glutamate 5-semialdehyde from L-glutamate: step 2/2. Catalyzes the NADPH-dependent reduction of L-glutamate 5-phosphate into L-glutamate 5-semialdehyde and phosphate. The product spontaneously undergoes cyclization to form 1-pyrroline-5-carboxylate. This chain is Gamma-glutamyl phosphate reductase, found in Campylobacter jejuni subsp. jejuni serotype O:23/36 (strain 81-176).